A 227-amino-acid polypeptide reads, in one-letter code: UPF0659 protein YMR090W (227 aa).

The protein belongs to the UPF0659 family.

It is found in the cytoplasm. This is UPF0659 protein YMR090W from Saccharomyces cerevisiae (strain ATCC 204508 / S288c) (Baker's yeast).